The primary structure comprises 745 residues: uncharacterized protein (745 aa).

The HTH araC/xylS-type domain occupies 158-256 (NQVCDYIELH…HQTPKQYRGD (99 aa)). DNA-binding regions (H-T-H motif) lie at residues 175-196 (SELSEYVGWSESHLSKKFTESL) and 223-246 (ITDIALQNGFSSAASFARTFKHFT).

This is an uncharacterized protein from Staphylococcus aureus (strain Mu50 / ATCC 700699).